The sequence spans 483 residues: Glutamyl-tRNA(Gln) amidotransferase subunit A (483 aa).

Active-site charge relay system residues include lysine 76 and serine 151. Residue serine 175 is the Acyl-ester intermediate of the active site.

Belongs to the amidase family. GatA subfamily. Heterotrimer of A, B and C subunits.

It catalyses the reaction L-glutamyl-tRNA(Gln) + L-glutamine + ATP + H2O = L-glutaminyl-tRNA(Gln) + L-glutamate + ADP + phosphate + H(+). In terms of biological role, allows the formation of correctly charged Gln-tRNA(Gln) through the transamidation of misacylated Glu-tRNA(Gln) in organisms which lack glutaminyl-tRNA synthetase. The reaction takes place in the presence of glutamine and ATP through an activated gamma-phospho-Glu-tRNA(Gln). In Pseudomonas putida (strain GB-1), this protein is Glutamyl-tRNA(Gln) amidotransferase subunit A.